The sequence spans 487 residues: WD repeat, SAM and U-box domain-containing protein 1 (487 aa).

7 WD repeats span residues 10–47, 52–93, 95–134, 137–176, 179–227, 237–276, and 279–318; these read SHRD…ELPF, GHGY…AVLE, PGRS…LRRT, VNDT…LHAE, AHDL…SAGI, GQSA…LLYT, and QHDR…SAQG. Positions 347 to 411 constitute an SAM domain; the sequence is WSEEEVLAWL…MKKIEELKMV (65 aa). The U-box domain occupies 416-487; that stretch reads GTPDEFLCPI…MAIFRWSTSQ (72 aa).

The chain is WD repeat, SAM and U-box domain-containing protein 1 (wdsub1) from Danio rerio (Zebrafish).